The following is a 436-amino-acid chain: T-box transcription factor TBX6 (436 aa).

The segment at residues 100–273 is a DNA-binding region (T-box); that stretch reads LWKEFSSVGT…ANPFAKGFRE (174 aa). A compositionally biased stretch (basic and acidic residues) spans 271 to 284; the sequence is FRENGRNCKRERDA. Disordered regions lie at residues 271 to 339 and 360 to 379; these read FREN…APAP and PSHL…SGRS. A compositionally biased stretch (low complexity) spans 325–339; it reads EQAPAPGEATAAPAP.

As to quaternary structure, forms a dimeric complex with DNA (in vitro). Expressed in fetal tail bud, posterior spinal tissue, intervertebral disk and testis. Also expressed in adult testis, kidney, lung, muscle and thymus.

Its subcellular location is the nucleus. Its function is as follows. T-box transcription factor that plays an essential role in the determination of the fate of axial stem cells: neural vs mesodermal. Acts in part by down-regulating, a specific enhancer (N1) of SOX2, to inhibit neural development. Seems to play also an essential role in left/right axis determination and acts through effects on Notch signaling around the node as well as through an effect on the morphology and motility of the nodal cilia. This chain is T-box transcription factor TBX6 (TBX6), found in Homo sapiens (Human).